The primary structure comprises 315 residues: MSDVAEEKAEFLVIRTYGSESFRKECADLIEKELHKLNATIARVPVGEFVAYAENAVKNETDSEAVGSSSVKRENSANDSPANTNDVDIVSSPVKRGRGRKAKNPSADADVNDTGSSPVKKGRGRPIKNPSADAGSPLVKKGRGRRAQTPAADTDAIDTASSPVKKGRGRPAKNPSADAGSPLVKKGRGRQAKNLAADTDAIDTASSPVKKGRGRPLKKTAAEADVNGLGSPSANRITGCPPSTKVSNQSSPPEPAVNESEEADEPVLKRGRSVKQPKDESESDDEDAEKAPAAIPKKRGRPGKSAIDAFFDGSD.

Residues 57 to 315 (VKNETDSEAV…AIDAFFDGSD (259 aa)) form a disordered region. Residues 77–86 (ANDSPANTND) are compositionally biased toward polar residues. Residues 118–128 (PVKKGRGRPIK) constitute a DNA-binding region (a.T hook 1). 2 stretches are compositionally biased toward low complexity: residues 147 to 160 (AQTPAADTDAIDTA) and 196 to 205 (AADTDAIDTA).

This sequence belongs to the HMGA family.

The protein localises to the nucleus. In terms of biological role, transcriptional regulator. Binds to specific sequence motifs in regulatory elements. May recruit transcription factors, or may induce structural changes in chromatin, to thereby modulate embryonic expression of ATP-dependent chaperone cdc-48.1. The protein is High mobility group protein hmg-12 of Caenorhabditis elegans.